The sequence spans 139 residues: Nucleoside diphosphate kinase (139 aa).

Lys-10, Phe-58, Arg-86, Thr-92, Arg-104, and Asn-114 together coordinate ATP. His-117 (pros-phosphohistidine intermediate) is an active-site residue.

Belongs to the NDK family. In terms of assembly, homotetramer. Mg(2+) serves as cofactor.

The protein resides in the cytoplasm. The catalysed reaction is a 2'-deoxyribonucleoside 5'-diphosphate + ATP = a 2'-deoxyribonucleoside 5'-triphosphate + ADP. The enzyme catalyses a ribonucleoside 5'-diphosphate + ATP = a ribonucleoside 5'-triphosphate + ADP. Functionally, major role in the synthesis of nucleoside triphosphates other than ATP. The ATP gamma phosphate is transferred to the NDP beta phosphate via a ping-pong mechanism, using a phosphorylated active-site intermediate. This is Nucleoside diphosphate kinase from Rhodococcus jostii (strain RHA1).